The chain runs to 354 residues: Guanine nucleotide-binding protein G(i) subunit alpha (354 aa).

The N-myristoyl glycine moiety is linked to residue Gly-2. Cys-3 carries the S-palmitoyl cysteine lipid modification. The region spanning 32–354 is the G-alpha domain; it reads REVKLLLLGA…KNNLKDCGLF (323 aa). Residues 35–48 form a G1 motif region; that stretch reads KLLLLGAGESGKST. GTP contacts are provided by residues 40 to 47, 175 to 181, 200 to 204, 269 to 272, and Ala-326; these read GAGESGKS, LRTRVKT, DVGGQ, and NKKD. 2 residues coordinate Mg(2+): Ser-47 and Thr-181. The tract at residues 173-181 is G2 motif; it reads DVLRTRVKT. The segment at 196 to 205 is G3 motif; that stretch reads FKMFDVGGQR. The segment at 265–272 is G4 motif; sequence ILFLNKKD. The interval 324–329 is G5 motif; sequence TCATDT.

It belongs to the G-alpha family. G(i/o/t/z) subfamily. In terms of assembly, g proteins are composed of 3 units; alpha, beta and gamma. The alpha chain contains the guanine nucleotide binding site.

Functionally, guanine nucleotide-binding proteins (G proteins) are involved as modulators or transducers in various transmembrane signaling systems. This G protein is involved in 1-methyladenine-induced oocyte maturation. The sequence is that of Guanine nucleotide-binding protein G(i) subunit alpha from Patiria pectinifera (Starfish).